A 634-amino-acid chain; its full sequence is Leucine--tRNA ligase subunit alpha (634 aa).

Positions 43-51 (PSGRIHMGH) match the 'HIGH' region motif.

Belongs to the class-I aminoacyl-tRNA synthetase family. Seems to consist of an alpha chain and a beta chain.

Its subcellular location is the cytoplasm. It carries out the reaction tRNA(Leu) + L-leucine + ATP = L-leucyl-tRNA(Leu) + AMP + diphosphate. The polypeptide is Leucine--tRNA ligase subunit alpha (leuS) (Aquifex aeolicus (strain VF5)).